Here is a 219-residue protein sequence, read N- to C-terminus: Ras-related protein Rab-3B (219 aa).

A2 is modified (N-acetylalanine). Residues S31, S32, V33, G34, K35, T36, S37, P49, and S53 each coordinate GTP. Mg(2+) is bound at residue T36. Residues 45 to 58 (DTFTPAFVSTVGID) carry the Switch 1 motif. Positions 54 and 77 each coordinate Mg(2+). The Switch 2 motif lies at 78–96 (TAGQERYRTITTAYYRGAM). G80 is a GTP binding site. T86 bears the Phosphothreonine mark. Residues N135, K136, D138, A166, and K167 each coordinate GTP. A phosphoserine mark is found at S188 and S190. S-geranylgeranyl cysteine attachment occurs at residues C217 and C219. C219 is subject to Cysteine methyl ester.

The protein belongs to the small GTPase superfamily. Rab family. Interacts with RIMS1, RIMS2, RPH3A and RPH3AL. The GTP-bound form interacts with GAS8/DRC4 (via coiled-coil domains). Interacts with GDI2, CHM and CHML; phosphorylation at Thr-86 disrupts these interactions. Interacts with MADD (via uDENN domain); the GTP-bound form is preferred for interaction. The cofactor is Mg(2+). In terms of processing, phosphorylation of Thr-86 in the switch II region by LRRK2 prevents the association of RAB regulatory proteins, including CHM, CHML and RAB GDP dissociation inhibitor GDI2.

The protein resides in the cell membrane. Its subcellular location is the golgi apparatus. It catalyses the reaction GTP + H2O = GDP + phosphate + H(+). Its activity is regulated as follows. Regulated by guanine nucleotide exchange factors (GEFs) which promote the exchange of bound GDP for free GTP. Regulated by GTPase activating proteins (GAPs) which increase the GTP hydrolysis activity. Inhibited by GDP dissociation inhibitors (GDIs) which prevent Rab-GDP dissociation. In terms of biological role, the small GTPases Rab are key regulators of intracellular membrane trafficking, from the formation of transport vesicles to their fusion with membranes. Rabs cycle between an inactive GDP-bound form and an active GTP-bound form that is able to recruit to membranes different sets of downstream effectors directly responsible for vesicle formation, movement, tethering and fusion. This is Ras-related protein Rab-3B (RAB3B) from Mesocricetus auratus (Golden hamster).